The sequence spans 564 residues: CTP synthase (564 aa).

The tract at residues 1-265 (MTKFVFVTGG…DEIVCHRLGI (265 aa)) is amidoligase domain. CTP is bound at residue serine 13. Serine 13 provides a ligand contact to UTP. Residues 14–19 (SLGKGI) and aspartate 71 each bind ATP. Mg(2+) is bound by residues aspartate 71 and glutamate 139. Residues 146–148 (DIE), 186–191 (KTKPTQ), and lysine 222 each bind CTP. Residues 186 to 191 (KTKPTQ) and lysine 222 contribute to the UTP site. Positions 290-543 (SIALVGKYVD…VRAAISFADK (254 aa)) constitute a Glutamine amidotransferase type-1 domain. Residue glycine 351 coordinates L-glutamine. Cysteine 378 acts as the Nucleophile; for glutamine hydrolysis in catalysis. L-glutamine is bound by residues 379 to 382 (LGMQ), glutamate 402, and arginine 469. Catalysis depends on residues histidine 516 and glutamate 518.

It belongs to the CTP synthase family. Homotetramer.

The catalysed reaction is UTP + L-glutamine + ATP + H2O = CTP + L-glutamate + ADP + phosphate + 2 H(+). It carries out the reaction L-glutamine + H2O = L-glutamate + NH4(+). It catalyses the reaction UTP + NH4(+) + ATP = CTP + ADP + phosphate + 2 H(+). The protein operates within pyrimidine metabolism; CTP biosynthesis via de novo pathway; CTP from UDP: step 2/2. Its activity is regulated as follows. Allosterically activated by GTP, when glutamine is the substrate; GTP has no effect on the reaction when ammonia is the substrate. The allosteric effector GTP functions by stabilizing the protein conformation that binds the tetrahedral intermediate(s) formed during glutamine hydrolysis. Inhibited by the product CTP, via allosteric rather than competitive inhibition. Its function is as follows. Catalyzes the ATP-dependent amination of UTP to CTP with either L-glutamine or ammonia as the source of nitrogen. Regulates intracellular CTP levels through interactions with the four ribonucleotide triphosphates. This is CTP synthase from Nitrosomonas eutropha (strain DSM 101675 / C91 / Nm57).